The chain runs to 192 residues: Xanthine phosphoribosyltransferase (192 aa).

Positions 20 and 27 each coordinate xanthine. 128 to 132 (ANGQA) contacts 5-phospho-alpha-D-ribose 1-diphosphate. K156 provides a ligand contact to xanthine.

It belongs to the purine/pyrimidine phosphoribosyltransferase family. Xpt subfamily. As to quaternary structure, homodimer.

The protein resides in the cytoplasm. The enzyme catalyses XMP + diphosphate = xanthine + 5-phospho-alpha-D-ribose 1-diphosphate. It functions in the pathway purine metabolism; XMP biosynthesis via salvage pathway; XMP from xanthine: step 1/1. Its function is as follows. Converts the preformed base xanthine, a product of nucleic acid breakdown, to xanthosine 5'-monophosphate (XMP), so it can be reused for RNA or DNA synthesis. This chain is Xanthine phosphoribosyltransferase, found in Ligilactobacillus salivarius (strain UCC118) (Lactobacillus salivarius).